The following is a 66-amino-acid chain: Beta-toxin Ct71 (66 aa).

The LCN-type CS-alpha/beta domain occupies Lys1–Asn66. 4 disulfides stabilise this stretch: Cys12-Cys65, Cys16-Cys41, Cys25-Cys46, and Cys29-Cys48. Asn66 carries the post-translational modification Asparagine amide.

It belongs to the long (4 C-C) scorpion toxin superfamily. Sodium channel inhibitor family. Beta subfamily. Expressed by the venom gland.

It localises to the secreted. In terms of biological role, beta toxins bind voltage-independently at site-4 of sodium channels (Nav) and shift the voltage of activation toward more negative potentials thereby affecting sodium channel activation and promoting spontaneous and repetitive firing. Lethal to mice. This chain is Beta-toxin Ct71, found in Centruroides tecomanus (Scorpion).